The sequence spans 157 residues: DNA gyrase inhibitor (157 aa).

It belongs to the DNA gyrase inhibitor family. Interacts with DNA gyrase.

It localises to the cytoplasm. Its function is as follows. Inhibits the supercoiling activity of DNA gyrase. Acts by inhibiting DNA gyrase at an early step, prior to (or at the step of) binding of DNA by the gyrase. It protects cells against toxins that target DNA gyrase, by inhibiting activity of these toxins and reducing the formation of lethal double-strand breaks in the cell. In Shigella boydii serotype 18 (strain CDC 3083-94 / BS512), this protein is DNA gyrase inhibitor.